A 117-amino-acid polypeptide reads, in one-letter code: DNA-directed RNA polymerase subunit omega (117 aa).

Residues 96-105 show a composition bias toward basic and acidic residues; that stretch reads KEEAEEEAKQ. The disordered stretch occupies residues 96–117; it reads KEEAEEEAKQKNSRAAKAAAAE. Residues 108–117 show a composition bias toward low complexity; it reads SRAAKAAAAE.

Belongs to the RNA polymerase subunit omega family. In terms of assembly, the RNAP catalytic core consists of 2 alpha, 1 beta, 1 beta' and 1 omega subunit. When a sigma factor is associated with the core the holoenzyme is formed, which can initiate transcription.

The enzyme catalyses RNA(n) + a ribonucleoside 5'-triphosphate = RNA(n+1) + diphosphate. In terms of biological role, promotes RNA polymerase assembly. Latches the N- and C-terminal regions of the beta' subunit thereby facilitating its interaction with the beta and alpha subunits. The sequence is that of DNA-directed RNA polymerase subunit omega (rpoZ) from Lactococcus lactis subsp. lactis (strain IL1403) (Streptococcus lactis).